A 218-amino-acid polypeptide reads, in one-letter code: MPDPLPDLSSLRLAYTRAELRRADLDPDPLRQFQGWLGEALQAGLREPYALSLATADASGRPSVRTVLLRGADERGLTFYTNYESHKGHDLAQNPQAELLFFWADLERQVRAYGPVERVSEEESTAYFHARPRESQIAAHASDPQSAPIANRGALEAKLAALQAQYPEGTPVPRPDFWGGYRVRVREWEFWQGRPSRLHDRFRYTWEGEGWRIERLMP.

Residues 12–15 (RLAY) and Arg70 contribute to the substrate site. Residues 65–70 (RTVLLR), 80–81 (YT), Lys87, and Gln109 each bind FMN. Substrate contacts are provided by Tyr127, Arg131, and Ser135. FMN is bound by residues 145–146 (QS) and Trp191. 197–199 (RLH) is a substrate binding site. Arg201 contacts FMN.

It belongs to the pyridoxamine 5'-phosphate oxidase family. As to quaternary structure, homodimer. FMN serves as cofactor.

The catalysed reaction is pyridoxamine 5'-phosphate + O2 + H2O = pyridoxal 5'-phosphate + H2O2 + NH4(+). It catalyses the reaction pyridoxine 5'-phosphate + O2 = pyridoxal 5'-phosphate + H2O2. The protein operates within cofactor metabolism; pyridoxal 5'-phosphate salvage; pyridoxal 5'-phosphate from pyridoxamine 5'-phosphate: step 1/1. Its pathway is cofactor metabolism; pyridoxal 5'-phosphate salvage; pyridoxal 5'-phosphate from pyridoxine 5'-phosphate: step 1/1. In terms of biological role, catalyzes the oxidation of either pyridoxine 5'-phosphate (PNP) or pyridoxamine 5'-phosphate (PMP) into pyridoxal 5'-phosphate (PLP). The sequence is that of Pyridoxine/pyridoxamine 5'-phosphate oxidase from Deinococcus geothermalis (strain DSM 11300 / CIP 105573 / AG-3a).